The following is a 483-amino-acid chain: Protein LMBR1L (483 aa).

The Extracellular portion of the chain corresponds to 1–21 (MEVNQDVSVREQIFHDWVREC). A helical membrane pass occupies residues 22–42 (IICSLLFSTLYLLSYIVITKF). Over 43-60 (KKHADFATVDVEDAAVNR) the chain is Cytoplasmic. Residues 61 to 81 (IALWMCTFTLAVSVGAVLLLP) form a helical membrane-spanning segment. The Extracellular portion of the chain corresponds to 82–112 (FSIISNEVLLSVPHNYYIQWLNGSLIHGLWN). Residues 113 to 133 (LVFLFSNLSLVFLMPFAYLFT) form a helical membrane-spanning segment. Topologically, residues 134 to 153 (EAEGFAGSKKGVMSRVYETT) are cytoplasmic. Residues 154-174 (VVLLLLTLLVFGIVWVASAIF) traverse the membrane as a helical segment. Residues 175–194 (DDDSAGRESLYDLWEYYLPY) are Extracellular-facing. A helical membrane pass occupies residues 195 to 215 (LYSGISLFGVLLLLLCTPFGL). The Cytoplasmic segment spans residues 216–294 (SRMFSVTGNL…RRRASPWQRN (79 aa)). A helical membrane pass occupies residues 295-315 (LVYPLAMLLLLALTGITVLIV). Over 316–342 (CVNVLELLIDEAAMPKGIQGSQLGKVS) the chain is Extracellular. Residues 343–363 (FSVFGSFGAAVQVILIFYLMA) traverse the membrane as a helical segment. Residues 364 to 386 (SSVVGFYSSPLFIQLLPQKQNTP) lie on the Cytoplasmic side of the membrane. A helical membrane pass occupies residues 387–407 (MTKIIGNCVSLLILSSALPVF). At 408–429 (SRTLGITRFDLLGDFGRFNWLG) the chain is on the extracellular side. Residues 430–450 (NFYLILLYNMMFAGLATLCLV) form a helical membrane-spanning segment. Topologically, residues 451 to 483 (KKFTWAVQAELIRAFGLDRLPLSVKKIRSQGKA) are cytoplasmic.

The protein belongs to the LIMR family. Dimer. Can also form higher oligomers.

It localises to the cell membrane. Its subcellular location is the endoplasmic reticulum membrane. May play a role in lymphocyte development by negatively regulating the canonical Wnt signaling pathway. May act as a LCN1 receptor. The sequence is that of Protein LMBR1L (lmbr1l) from Xenopus laevis (African clawed frog).